Here is a 311-residue protein sequence, read N- to C-terminus: tRNA-cytidine(32) 2-sulfurtransferase (311 aa).

A PP-loop motif motif is present at residues 45–50; it reads SGGKDS. Cys120, Cys123, and Cys211 together coordinate [4Fe-4S] cluster.

This sequence belongs to the TtcA family. As to quaternary structure, homodimer. Mg(2+) is required as a cofactor. Requires [4Fe-4S] cluster as cofactor.

Its subcellular location is the cytoplasm. The enzyme catalyses cytidine(32) in tRNA + S-sulfanyl-L-cysteinyl-[cysteine desulfurase] + AH2 + ATP = 2-thiocytidine(32) in tRNA + L-cysteinyl-[cysteine desulfurase] + A + AMP + diphosphate + H(+). The protein operates within tRNA modification. In terms of biological role, catalyzes the ATP-dependent 2-thiolation of cytidine in position 32 of tRNA, to form 2-thiocytidine (s(2)C32). The sulfur atoms are provided by the cysteine/cysteine desulfurase (IscS) system. This is tRNA-cytidine(32) 2-sulfurtransferase from Shewanella pealeana (strain ATCC 700345 / ANG-SQ1).